Here is a 383-residue protein sequence, read N- to C-terminus: Probable transcriptional repressor C1348.12 (383 aa).

The segment at residues 34-60 (CVICRSKKQKCDGQLPCLYCKKYEYQC) is a DNA-binding region (zn(2)-C6 fungal-type).

The protein localises to the nucleus. Functionally, probable transcriptional repressor of multidrug resistance genes. This chain is Probable transcriptional repressor C1348.12, found in Schizosaccharomyces pombe (strain 972 / ATCC 24843) (Fission yeast).